The primary structure comprises 406 residues: Putative competence-damage inducible protein (406 aa).

Belongs to the CinA family.

The polypeptide is Putative competence-damage inducible protein (Natranaerobius thermophilus (strain ATCC BAA-1301 / DSM 18059 / JW/NM-WN-LF)).